The following is a 237-amino-acid chain: Probable transcriptional regulatory protein MCAP_0598 (237 aa).

This sequence belongs to the TACO1 family.

Its subcellular location is the cytoplasm. This is Probable transcriptional regulatory protein MCAP_0598 from Mycoplasma capricolum subsp. capricolum (strain California kid / ATCC 27343 / NCTC 10154).